Reading from the N-terminus, the 1069-residue chain is ISWI chromatin-remodeling complex ATPase CHR17 (1069 aa).

Positions 1–10 are enriched in basic and acidic residues; the sequence is MARASKREVS. Disordered stretches follow at residues 1-93 and 136-168; these read MARA…KEMQ and FAKS…EECL. Acidic residues-rich tracts occupy residues 15–37 and 45–78; these read YSSE…DELE and SDEE…DEEK. The segment covering 79-93 has biased composition (basic and acidic residues); the sequence is AEISKREKARLKEMQ. A compositionally biased stretch (basic residues) spans 146-156; sequence KKGKGRGRHSS. The 166-residue stretch at 206–371 folds into the Helicase ATP-binding domain; the sequence is IRLYENGING…WALLNFLLPE (166 aa). An ATP-binding site is contributed by 219 to 226; that stretch reads DEMGLGKT. The DEAH box motif lies at 322 to 325; it reads DEAH. The Helicase C-terminal domain occupies 499–650; it reads LLDKLLPKLK…ALVIQQGRLA (152 aa). SANT domains follow at residues 845–897 and 946–1007; these read EGFS…VRYK and QNKG…DTLI. The tract at residues 1016 to 1069 is disordered; sequence EFDERERQARKEKKLSKSATPSKRPSGRQANESPSSLLKKRKQLSMDDYGKRRK. Residues 1032-1051 are compositionally biased toward polar residues; that stretch reads KSATPSKRPSGRQANESPSS. Positions 1059-1069 are enriched in basic and acidic residues; it reads LSMDDYGKRRK.

This sequence belongs to the SNF2/RAD54 helicase family. ISWI subfamily. Interacts with RLT1. Binds to FGT1. In terms of tissue distribution, highly expressed in growing tissues such as inflorescence and flower meristems, young leaves and floral organs. Expressed in roots, rosette and cauline leaves, stems, flowers, inflorescences and siliques.

The protein localises to the nucleus. Possesses intrinsic ATP-dependent nucleosome-remodeling activity. Constitutes the catalytic subunit of several complexes capable of forming ordered nucleosome arrays on chromatin. Involved in the formation of nucleosome distribution patterns. Required for the maintenance of the plant vegetative phase. In association with RLT1 or RLT2 may prevent the early activation of the vegetative-to-reproductive transition by regulating key genes that contribute to flower timing, such as FT, SEP1, SEP3, AGL8/FUL, SOC1 and FLC. Necessary to acquire heat stress (HS) memory. This chain is ISWI chromatin-remodeling complex ATPase CHR17, found in Arabidopsis thaliana (Mouse-ear cress).